The primary structure comprises 610 residues: MPKLKIFLFKYLYSKRFIGILVAIAIIFSYFTYYTISIGTKNGAVNSSKVIWFLLIDLIIFLVLGILLTRKFFQSFFFKNSDQNTSKLQNRIVVAFSLAAAIPTIIVSISSAYFLNLSIQAWFDRKISVVLDQSIMVADSYIAEHKVLLRETALAVAEDLSDMYYDLIHNPALFTKTLNTEAEMRSLDEAIVLNKSTNTIIANSYLSFSLSFATIPAHLIKKADSCEPVEVKSDPTKIRMLIKLKEYNDVYLLVGRSIDNKIIDHIDATNGAAAEYHRLKNQIGNIQIKFSIIFIFIALLLLLIAISFGVIVTAKIVNPIKKLVIATDKVKSGDLTVQVPENEVDKDEIGTLYAAFNRMIKQLSRQQRDLVIAQRALAWSDVAKKVAHEIKNPLTPILLASERLLKKFSPEIKERAEFENYLKMIIRHTNDIKNIVSEFVLFARLPAPKFTNCDLIYVINNIVEARKLLNNNILYSFETNIDQFDFTCDTTQINQVMINLLKNAEESLEGSNQAAIKVNINTSEQFINITVLDNGRGFPPELIGKATESYVTTRSKGMGVGLAIVKRIVEEHCGVLDIANRETGGAVIDIRFNLEELKLKVKRHEIGVIS.

4 helical membrane-spanning segments follow: residues 18–38 (IGIL…TISI), 49–69 (KVIW…ILLT), 92–112 (IVVA…ISSA), and 292–312 (IIFI…GVIV). An HAMP domain is found at 314-368 (AKIVNPIKKLVIATDKVKSGDLTVQVPENEVDKDEIGTLYAAFNRMIKQLSRQQR). Positions 385-596 (KVAHEIKNPL…VIDIRFNLEE (212 aa)) constitute a Histidine kinase domain. At His-388 the chain carries Phosphohistidine; by autocatalysis.

It localises to the cell membrane. It carries out the reaction ATP + protein L-histidine = ADP + protein N-phospho-L-histidine.. Member of the two-component regulatory system RBE_0470/RBE_0312. This chain is Putative sensor histidine kinase NtrY-like, found in Rickettsia bellii (strain RML369-C).